The following is a 355-amino-acid chain: Uroporphyrinogen decarboxylase (355 aa).

Residues 27–31, Asp-77, Tyr-154, Thr-209, and His-327 contribute to the substrate site; that span reads RQAGR.

It belongs to the uroporphyrinogen decarboxylase family. As to quaternary structure, homodimer.

It is found in the cytoplasm. The catalysed reaction is uroporphyrinogen III + 4 H(+) = coproporphyrinogen III + 4 CO2. It participates in porphyrin-containing compound metabolism; protoporphyrin-IX biosynthesis; coproporphyrinogen-III from 5-aminolevulinate: step 4/4. In terms of biological role, catalyzes the decarboxylation of four acetate groups of uroporphyrinogen-III to yield coproporphyrinogen-III. This Tolumonas auensis (strain DSM 9187 / NBRC 110442 / TA 4) protein is Uroporphyrinogen decarboxylase.